Consider the following 108-residue polypeptide: Ig kappa chain V-V region HP 93G7 (108 aa).

The framework-1 stretch occupies residues 1–23; the sequence is DIQMTQTTSSLSASLGDRVTISC. A disulfide bridge links C23 with C88. Positions 24–34 are complementarity-determining-1; that stretch reads RASQDISNYLN. A framework-2 region spans residues 35 to 49; it reads WYQQKPDGTVKLLIY. The interval 50–56 is complementarity-determining-2; sequence YTSRLHS. The framework-3 stretch occupies residues 57-88; the sequence is GVPSRFSGSGSGTDYSLTISNLEQEDIATYFC. A complementarity-determining-3 region spans residues 89-97; the sequence is QQGNMLPRT. Residues 98 to 108 form a framework-4 region; that stretch reads FGGGTKLEIKR.

The chain is Ig kappa chain V-V region HP 93G7 from Mus musculus (Mouse).